We begin with the raw amino-acid sequence, 171 residues long: Adenine phosphoribosyltransferase (171 aa).

The protein belongs to the purine/pyrimidine phosphoribosyltransferase family. In terms of assembly, homodimer.

It is found in the cytoplasm. The catalysed reaction is AMP + diphosphate = 5-phospho-alpha-D-ribose 1-diphosphate + adenine. Its pathway is purine metabolism; AMP biosynthesis via salvage pathway; AMP from adenine: step 1/1. Functionally, catalyzes a salvage reaction resulting in the formation of AMP, that is energically less costly than de novo synthesis. The chain is Adenine phosphoribosyltransferase from Mycoplasma mobile (strain ATCC 43663 / 163K / NCTC 11711) (Mesomycoplasma mobile).